We begin with the raw amino-acid sequence, 270 residues long: Pantoate kinase (270 aa).

Belongs to the GHMP kinase family. PoK subfamily.

The enzyme catalyses (R)-pantoate + ATP = (R)-4-phosphopantoate + ADP + H(+). The protein operates within cofactor biosynthesis; coenzyme A biosynthesis. In terms of biological role, phosphorylates (R)-pantoate to form (R)-4-phosphopantoate in the CoA biosynthesis pathway. The sequence is that of Pantoate kinase from Methanocaldococcus jannaschii (strain ATCC 43067 / DSM 2661 / JAL-1 / JCM 10045 / NBRC 100440) (Methanococcus jannaschii).